The chain runs to 212 residues: V-type ATP synthase subunit E (212 aa).

The protein belongs to the V-ATPase E subunit family.

Its function is as follows. Produces ATP from ADP in the presence of a proton gradient across the membrane. The polypeptide is V-type ATP synthase subunit E (Nitrosococcus oceani (strain ATCC 19707 / BCRC 17464 / JCM 30415 / NCIMB 11848 / C-107)).